The sequence spans 238 residues: MIRKTLAASCAVLLMAGCNAARQQASPLPPVAPPQTYVEPEQAAANPGSMFNDAEADLMFSDSRARRVGDIVLVKIVENAKAKNKADTTSERDSTNNYTVGAYFGQDSASINPMNPVGAFGGKVGTNALLQTGSKSKLDGKGETKRENTVTATIAARVVRVMPGGLLQVEGARETRVNDETQYIVLSGLVRSRDVASDNSVMSTQLADSRIAYYGKGVLADKQRPGWFSRLMDNLWPF.

A signal peptide spans M1 to G17. C18 is lipidated: N-palmitoyl cysteine. C18 carries S-diacylglycerol cysteine lipidation.

The protein belongs to the FlgH family. The basal body constitutes a major portion of the flagellar organelle and consists of four rings (L,P,S, and M) mounted on a central rod.

The protein resides in the cell outer membrane. It is found in the bacterial flagellum basal body. Functionally, assembles around the rod to form the L-ring and probably protects the motor/basal body from shearing forces during rotation. The polypeptide is Flagellar L-ring protein (Nitratidesulfovibrio vulgaris (strain ATCC 29579 / DSM 644 / CCUG 34227 / NCIMB 8303 / VKM B-1760 / Hildenborough) (Desulfovibrio vulgaris)).